The primary structure comprises 83 residues: Apolipoprotein C-I (83 aa).

An N-terminal signal peptide occupies residues 1 to 26 (MRLFLSLPVLVVVLSIVLEGPAPAQG).

This sequence belongs to the apolipoprotein C1 family. In terms of tissue distribution, synthesized mainly in liver and to a minor degree in intestine. Also found in the lung and spleen.

It is found in the secreted. Inhibitor of lipoprotein binding to the low density lipoprotein (LDL) receptor, LDL receptor-related protein, and very low density lipoprotein (VLDL) receptor. Associates with high density lipoproteins (HDL) and the triacylglycerol-rich lipoproteins in the plasma and makes up about 10% of the protein of the VLDL and 2% of that of HDL. Appears to interfere directly with fatty acid uptake and is also the major plasma inhibitor of cholesteryl ester transfer protein (CETP). Binds free fatty acids and reduces their intracellular esterification. Modulates the interaction of APOE with beta-migrating VLDL and inhibits binding of beta-VLDL to the LDL receptor-related protein. In Homo sapiens (Human), this protein is Apolipoprotein C-I (APOC1).